Here is a 497-residue protein sequence, read N- to C-terminus: Glycerol kinase (497 aa).

Thr-12 serves as a coordination point for ADP. Positions 12, 13, and 14 each coordinate ATP. A sn-glycerol 3-phosphate-binding site is contributed by Thr-12. Arg-16 is an ADP binding site. Residues Arg-82, Glu-83, Tyr-134, and Asp-243 each coordinate sn-glycerol 3-phosphate. The glycerol site is built by Arg-82, Glu-83, Tyr-134, Asp-243, and Gln-244. Positions 265 and 308 each coordinate ADP. The ATP site is built by Thr-265, Gly-308, Gln-312, and Gly-411. Residue Gly-411 participates in ADP binding.

Belongs to the FGGY kinase family.

It catalyses the reaction glycerol + ATP = sn-glycerol 3-phosphate + ADP + H(+). Its pathway is polyol metabolism; glycerol degradation via glycerol kinase pathway; sn-glycerol 3-phosphate from glycerol: step 1/1. Its activity is regulated as follows. Inhibited by fructose 1,6-bisphosphate (FBP). In terms of biological role, key enzyme in the regulation of glycerol uptake and metabolism. Catalyzes the phosphorylation of glycerol to yield sn-glycerol 3-phosphate. The chain is Glycerol kinase from Sinorhizobium fredii (strain NBRC 101917 / NGR234).